The primary structure comprises 196 residues: MSLRIDAVILAGGMARRMGGNDKGLVELLDKPMIEHSIDRIKPQVKEIMINANRNQSRYADLGYPVFSDEDSGYLGPLAGMITAMGQTQADYLLVVPCDCPLLPLDLVERMLTKIQSEGAELAVASDGKREQPVVLLLKPSLRDSMKAFLDGGERKIDFWYAKHHCVVTEFSDQPNAFINVNTPEQKQQLAEAIAK.

Residues 10–12 (LAG), Lys23, Asn51, Asp69, and Asp99 contribute to the GTP site. Asp99 is a binding site for Mg(2+).

Belongs to the MobA family. Monomer. Requires Mg(2+) as cofactor.

The protein resides in the cytoplasm. It catalyses the reaction Mo-molybdopterin + GTP + H(+) = Mo-molybdopterin guanine dinucleotide + diphosphate. In terms of biological role, transfers a GMP moiety from GTP to Mo-molybdopterin (Mo-MPT) cofactor (Moco or molybdenum cofactor) to form Mo-molybdopterin guanine dinucleotide (Mo-MGD) cofactor. The protein is Molybdenum cofactor guanylyltransferase of Shewanella woodyi (strain ATCC 51908 / MS32).